Consider the following 273-residue polypeptide: NADPH-dependent 7-cyano-7-deazaguanine reductase (273 aa).

80-82 (VES) is a substrate binding site. 82-83 (SK) lines the NADPH pocket. The Thioimide intermediate role is filled by C180. The active-site Proton donor is the D187. 219–220 (HE) lines the substrate pocket. An NADPH-binding site is contributed by 248–249 (RG).

The protein belongs to the GTP cyclohydrolase I family. QueF type 2 subfamily. Homodimer.

The protein resides in the cytoplasm. It catalyses the reaction 7-aminomethyl-7-carbaguanine + 2 NADP(+) = 7-cyano-7-deazaguanine + 2 NADPH + 3 H(+). The protein operates within tRNA modification; tRNA-queuosine biosynthesis. Its function is as follows. Catalyzes the NADPH-dependent reduction of 7-cyano-7-deazaguanine (preQ0) to 7-aminomethyl-7-deazaguanine (preQ1). This is NADPH-dependent 7-cyano-7-deazaguanine reductase from Bordetella parapertussis (strain 12822 / ATCC BAA-587 / NCTC 13253).